A 79-amino-acid chain; its full sequence is Sec-independent protein translocase protein TatA (79 aa).

Residues 1–21 (MHMPSGTQWLIILLIVVLLFG) traverse the membrane as a helical segment.

Belongs to the TatA/E family. The Tat system comprises two distinct complexes: a TatABC complex, containing multiple copies of TatA, TatB and TatC subunits, and a separate TatA complex, containing only TatA subunits. Substrates initially bind to the TatABC complex, which probably triggers association of the separate TatA complex to form the active translocon.

It is found in the cell inner membrane. Its function is as follows. Part of the twin-arginine translocation (Tat) system that transports large folded proteins containing a characteristic twin-arginine motif in their signal peptide across membranes. TatA could form the protein-conducting channel of the Tat system. The chain is Sec-independent protein translocase protein TatA from Campylobacter lari (strain RM2100 / D67 / ATCC BAA-1060).